We begin with the raw amino-acid sequence, 320 residues long: Putative movement protein (320 aa).

Residues His144, Asp171, and Ser199 contribute to the active site. The segment at 251–320 (RRSRSISAKR…GKGNSDGSSP (70 aa)) is disordered. A compositionally biased stretch (basic and acidic residues) spans 278 to 289 (RIERFGKDEFGR).

This sequence belongs to the tobamoviruses movement protein family.

May play a role in viral cell to cell movement by increasing the size exclusion limit of plasmodesmata and forming a complex with viral RNA to assist its movement. May also have a papain-like protease activity and cleave the genome polyprotein. The sequence is that of Putative movement protein from Malus sylvestris (European crab apple).